Here is a 336-residue protein sequence, read N- to C-terminus: Anthranilate phosphoribosyltransferase (336 aa).

Residues Gly83, Gly86–Asp87, Thr91, Asn93–Thr96, Lys111–Ser119, and Ser123 contribute to the 5-phospho-alpha-D-ribose 1-diphosphate site. Gly83 contacts anthranilate. Ser95 contacts Mg(2+). Asn114 serves as a coordination point for anthranilate. Arg169 contacts anthranilate. Residues Asp227 and Glu228 each coordinate Mg(2+).

The protein belongs to the anthranilate phosphoribosyltransferase family. As to quaternary structure, homodimer. Mg(2+) is required as a cofactor.

The catalysed reaction is N-(5-phospho-beta-D-ribosyl)anthranilate + diphosphate = 5-phospho-alpha-D-ribose 1-diphosphate + anthranilate. It functions in the pathway amino-acid biosynthesis; L-tryptophan biosynthesis; L-tryptophan from chorismate: step 2/5. Functionally, catalyzes the transfer of the phosphoribosyl group of 5-phosphorylribose-1-pyrophosphate (PRPP) to anthranilate to yield N-(5'-phosphoribosyl)-anthranilate (PRA). The protein is Anthranilate phosphoribosyltransferase of Vibrio campbellii (strain ATCC BAA-1116).